We begin with the raw amino-acid sequence, 177 residues long: Protein SOB FIVE-LIKE 6 (177 aa).

The SOFL-A motif lies at 14 to 19 (SGWTMY). Disordered regions lie at residues 37–60 (ETKQEHDEDSSMVSDASSGPPYYC) and 78–104 (KSKSKNKNKNKKKVHEEQGYSERFNSS). An SOFL-B motif is present at residues 47–56 (SMVSDASSGP). Basic residues predominate over residues 79–90 (SKSKNKNKNKKK).

The protein belongs to the SOFL plant protein family. In terms of tissue distribution, expressed in seedlings, flowers and siliques. Barely detectable in roots and leaves.

The protein localises to the cytoplasm. It is found in the nucleus. Its function is as follows. Involved in cytokinin-mediated development. This chain is Protein SOB FIVE-LIKE 6, found in Arabidopsis thaliana (Mouse-ear cress).